The primary structure comprises 122 residues: Large ribosomal subunit protein uL18 (122 aa).

This sequence belongs to the universal ribosomal protein uL18 family. Part of the 50S ribosomal subunit; part of the 5S rRNA/L5/L18/L25 subcomplex. Contacts the 5S and 23S rRNAs.

This is one of the proteins that bind and probably mediate the attachment of the 5S RNA into the large ribosomal subunit, where it forms part of the central protuberance. The chain is Large ribosomal subunit protein uL18 from Synechococcus sp. (strain JA-2-3B'a(2-13)) (Cyanobacteria bacterium Yellowstone B-Prime).